We begin with the raw amino-acid sequence, 154 residues long: Lipoprotein signal peptidase (154 aa).

Helical transmembrane passes span 8–28 (AFFLISVACFLADYYSKYWAL), 36–56 (IVVNTYMNFILAFNHGAAFSF), 66–86 (WLFAGFAGIVALWLIMTLLTK), and 88–108 (HHWLMSVSYACILGGAVGNLY). Residues Asp-118 and Asp-136 contribute to the active site. Residues 129-149 (WPVFNLADVAITLGVILMLIA) form a helical membrane-spanning segment.

This sequence belongs to the peptidase A8 family.

The protein localises to the cell inner membrane. It carries out the reaction Release of signal peptides from bacterial membrane prolipoproteins. Hydrolyzes -Xaa-Yaa-Zaa-|-(S,diacylglyceryl)Cys-, in which Xaa is hydrophobic (preferably Leu), and Yaa (Ala or Ser) and Zaa (Gly or Ala) have small, neutral side chains.. It functions in the pathway protein modification; lipoprotein biosynthesis (signal peptide cleavage). In terms of biological role, this protein specifically catalyzes the removal of signal peptides from prolipoproteins. The sequence is that of Lipoprotein signal peptidase from Dichelobacter nodosus (strain VCS1703A).